Here is a 1916-residue protein sequence, read N- to C-terminus: Endoribonuclease Dicer (1916 aa).

A Helicase ATP-binding domain is found at 51 to 227 (LLEAALDHNT…ELEEKIQKLE (177 aa)). 64-71 (LNTGSGKT) provides a ligand contact to ATP. The DECH box motif lies at 175–178 (DECH). The required for interaction with PRKRA and TARBP2 stretch occupies residues 256–595 (DCGPFTDRSG…LRNKCSKSAD (340 aa)). Residues 409–433 (YVSWSDSEDDDDDEEIEEKEKPETN) are disordered. A phosphoserine mark is found at Ser-413 and Ser-415. A compositionally biased stretch (acidic residues) spans 414-425 (DSEDDDDDEEIE). In terms of domain architecture, Helicase C-terminal spans 433 to 602 (NFPSPFTNIL…SADGAEADVH (170 aa)). Residues 630–722 (AIGHINRYCA…MPVGKETVKY (93 aa)) enclose the Dicer dsRNA-binding fold domain. Positions 726–745 (LDLHDEEETSVPGRPGSTKR) are disordered. One can recognise a PAZ domain in the interval 895 to 1042 (KFMEDIEKSE…LVPELCAIHP (148 aa)). A phosphoserine mark is found at Ser-1016 and Ser-1160. The region spanning 1276–1403 (DSEQSPSVGY…SEKWEKDEMT (128 aa)) is the RNase III 1 domain. Positions 1316, 1395, and 1398 each coordinate Mg(2+). Ser-1456, Ser-1464, and Ser-1466 each carry phosphoserine. The disordered stretch occupies residues 1598 to 1626 (ALDPAQENGSSQQKSLSGSCAAPVGPRSS). Positions 1604 to 1615 (ENGSSQQKSLSG) are enriched in polar residues. The region spanning 1660-1818 (FETFEKKINY…LAGAIYMDSG (159 aa)) is the RNase III 2 domain. Glu-1699, Asp-1804, and Glu-1807 together coordinate Mg(2+). Residues 1843 to 1908 (VPRSPVRELL…ARRALRSLKA (66 aa)) form the DRBM domain. Ser-1862 carries the phosphoserine modification.

It belongs to the helicase family. Dicer subfamily. As to quaternary structure, component of the RISC loading complex (RLC), or micro-RNA (miRNA) loading complex (miRLC), which is composed of DICER1, AGO2 and TARBP2; DICER1 and TARBP2 are required to process precursor miRNAs (pre-miRNAs) to mature miRNAs and then load them onto AGO2. Note that the trimeric RLC/miRLC is also referred to as RISC. Interacts with DHX9, AGO1, PIWIL1 and PRKRA. Interacts with AGO2, TARBP2, EIF6, MOV10 and RPL7A (60S ribosome subunit); they form a large RNA-induced silencing complex (RISC). Interacts with BCDIN3D. Interacts (via Dicer dsRNA-binding fold domain) with ALOX5 (via PLAT domain); this interaction enhances arachidonate 5-lipoxygenase activity and modifies the miRNA precursor processing activity of DICER1. Mg(2+) serves as cofactor. Requires Mn(2+) as cofactor. As to expression, isoform 1 is expressed in a wide variety of tissues. Isoform 2 is specifically expressed in oocytes during their growth (at protein level).

The protein localises to the cytoplasm. It carries out the reaction Endonucleolytic cleavage to 5'-phosphomonoester.. In terms of biological role, double-stranded RNA (dsRNA) endoribonuclease playing a central role in short dsRNA-mediated post-transcriptional gene silencing. Cleaves naturally occurring long dsRNAs and short hairpin pre-microRNAs (miRNA) into fragments of twenty-one to twenty-three nucleotides with 3' overhang of two nucleotides, producing respectively short interfering RNAs (siRNA) and mature microRNAs. SiRNAs and miRNAs serve as guide to direct the RNA-induced silencing complex (RISC) to complementary RNAs to degrade them or prevent their translation. Gene silencing mediated by siRNAs, also called RNA interference, controls the elimination of transcripts from mobile and repetitive DNA elements of the genome but also the degradation of exogenous RNA of viral origin for instance. The miRNA pathway on the other side is a mean to specifically regulate the expression of target genes. More active than isoform 1 to process long double-stranded RNA into siRNAs. Responsible for the accumulation of endogenous siRNAs observed in mouse oocytes compared to somatic cells and it regulates meiotic spindle organization in female germline. This Mus musculus (Mouse) protein is Endoribonuclease Dicer (Dicer1).